The following is a 153-amino-acid chain: Proline-rich membrane anchor 1 (153 aa).

A signal peptide spans M1 to A35. The Extracellular segment spans residues E36–G92. Residues P56 to P70 form the PRAD domain. Positions P59 to R71 are enriched in pro residues. Residues P59–N79 are disordered. An N-linked (GlcNAc...) asparagine glycan is attached at N79. The chain crosses the membrane as a helical span at residues L93–I113. The Cytoplasmic segment spans residues C114–V153. The tract at residues G129 to V153 is disordered.

In terms of assembly, interacts with ACHE, probably through disulfide bonds. In terms of tissue distribution, predominantly expressed in the central nervous system, including in the brain. Also expressed in muscle, heart and kidney. Isoform 1 may be predominant in the cortex and striatum, while isoform 2 is more abundant in the cerebellum.

It is found in the cell membrane. It localises to the cell junction. The protein resides in the synapse. Its function is as follows. Required to anchor acetylcholinesterase (ACHE) to the basal lamina of the neuromuscular junction and to the membrane of neuronal synapses in brain. Also able to organize ACHE into tetramers. The sequence is that of Proline-rich membrane anchor 1 (Prima1) from Mus musculus (Mouse).